The following is a 575-amino-acid chain: Flagellin A (575 aa).

Repeat copies occupy residues 405-409, 411-415, and 447-450.

It belongs to the bacterial flagellin family. Heteromer of flaA and flaB.

It localises to the secreted. The protein localises to the bacterial flagellum. Functionally, flagellin is the subunit protein which polymerizes to form the filaments of bacterial flagella. The sequence is that of Flagellin A (flaA) from Campylobacter jejuni.